Reading from the N-terminus, the 320-residue chain is Taste receptor type 2 member 129 (320 aa).

Topologically, residues 1-8 (MDGIVQNM) are extracellular. A helical transmembrane segment spans residues 9–29 (FTFIVIVEIIIGWIGNGFIAL). The Cytoplasmic portion of the chain corresponds to 30–55 (VNCIHWYKRRKISALNQILTALAFSR). The chain crosses the membrane as a helical span at residues 56 to 76 (IYLLLTVFTVIAVSTLYTHVL). At 77-88 (VTRRVVKLINFH) the chain is on the extracellular side. Residues 89–109 (LLFSNHFSMWLAACLGLYYFL) form a helical membrane-spanning segment. The Cytoplasmic portion of the chain corresponds to 110–128 (KIAHFPNSIFVYLKMRINQ). The chain crosses the membrane as a helical span at residues 129-149 (VVSGTLLMSLGLLFLNTLLIN). The Extracellular segment spans residues 150–185 (SYIDTKIDDYREHLLYDFTSNNTASFYRVILVINNC). Asparagine 170 carries N-linked (GlcNAc...) asparagine glycosylation. The helical transmembrane segment at 186–206 (IFTSIPFTLSQSTFLLLIFSL) threads the bilayer. At 207-233 (WRHYKKMQQHAQRCRDVLADAHIRVLQ) the chain is on the cytoplasmic side. A helical transmembrane segment spans residues 234–254 (TMVTYVLLCAIFFLSLSMQIL). The Extracellular segment spans residues 255-264 (RSELLKNILY). The helical transmembrane segment at 265–285 (VRFCEIVAAVFPSGHSCVLIC) threads the bilayer. Over 286–320 (RDTNLRGTFLSVLSWLKQRFTSWIPNINCRSSCIF) the chain is Cytoplasmic.

The protein belongs to the G-protein coupled receptor T2R family.

It localises to the membrane. Functionally, putative taste receptor which may play a role in the perception of bitterness. This chain is Taste receptor type 2 member 129, found in Mus musculus (Mouse).